The primary structure comprises 270 residues: Putative hydro-lyase ACIAD2519 (270 aa).

It belongs to the D-glutamate cyclase family.

The polypeptide is Putative hydro-lyase ACIAD2519 (Acinetobacter baylyi (strain ATCC 33305 / BD413 / ADP1)).